Here is a 436-residue protein sequence, read N- to C-terminus: Histidinol dehydrogenase (436 aa).

NAD(+)-binding residues include Tyr135, Gln197, and Asn220. The substrate site is built by Thr243, Gln265, and His268. Positions 265 and 268 each coordinate Zn(2+). Active-site proton acceptor residues include Glu334 and His335. Residues His335, Asp368, Glu422, and His427 each contribute to the substrate site. Asp368 contacts Zn(2+). Residue His427 participates in Zn(2+) binding.

It belongs to the histidinol dehydrogenase family. It depends on Zn(2+) as a cofactor.

It carries out the reaction L-histidinol + 2 NAD(+) + H2O = L-histidine + 2 NADH + 3 H(+). Its pathway is amino-acid biosynthesis; L-histidine biosynthesis; L-histidine from 5-phospho-alpha-D-ribose 1-diphosphate: step 9/9. In terms of biological role, catalyzes the sequential NAD-dependent oxidations of L-histidinol to L-histidinaldehyde and then to L-histidine. The chain is Histidinol dehydrogenase from Deinococcus radiodurans (strain ATCC 13939 / DSM 20539 / JCM 16871 / CCUG 27074 / LMG 4051 / NBRC 15346 / NCIMB 9279 / VKM B-1422 / R1).